The following is a 131-amino-acid chain: Snaclec macrovipecetin subunit alpha (131 aa).

3 disulfides stabilise this stretch: cysteine 2–cysteine 13, cysteine 30–cysteine 125, and cysteine 100–cysteine 117. In terms of domain architecture, C-type lectin spans 9-126; the sequence is HEEHCYKVFR…CEDKNPFICK (118 aa).

As to quaternary structure, heterodimer of subunits alpha and beta; disulfide-linked. As to expression, expressed by the venom gland.

It is found in the secreted. Interferes with one step of hemostasis (modulation of platelet aggregation, or coagulation cascade, for example). In Macrovipera lebetinus (Levantine viper), this protein is Snaclec macrovipecetin subunit alpha.